A 454-amino-acid chain; its full sequence is Bifunctional protein GlmU (454 aa).

A pyrophosphorylase region spans residues 1–226; sequence MALNVVILAA…AIEVEGANNR (226 aa). UDP-N-acetyl-alpha-D-glucosamine-binding positions include 8-11, K22, Q73, 78-79, 100-102, G137, E151, N166, and N224; these read LAAG, GT, and YGD. D102 contacts Mg(2+). Position 224 (N224) interacts with Mg(2+). A linker region spans residues 227-247; that stretch reads VQLAQLERAYQAREAEKLMLA. Residues 248 to 454 are N-acetyltransferase; sequence GANLRDPHRI…DWKRPVKIKK (207 aa). UDP-N-acetyl-alpha-D-glucosamine is bound by residues R330 and K348. The active-site Proton acceptor is H360. Residues Y363 and N374 each contribute to the UDP-N-acetyl-alpha-D-glucosamine site. Residues A377, 383 to 384, S402, A420, and R437 contribute to the acetyl-CoA site; that span reads NY.

In the N-terminal section; belongs to the N-acetylglucosamine-1-phosphate uridyltransferase family. The protein in the C-terminal section; belongs to the transferase hexapeptide repeat family. Homotrimer. Mg(2+) is required as a cofactor.

It localises to the cytoplasm. The catalysed reaction is alpha-D-glucosamine 1-phosphate + acetyl-CoA = N-acetyl-alpha-D-glucosamine 1-phosphate + CoA + H(+). It carries out the reaction N-acetyl-alpha-D-glucosamine 1-phosphate + UTP + H(+) = UDP-N-acetyl-alpha-D-glucosamine + diphosphate. It participates in nucleotide-sugar biosynthesis; UDP-N-acetyl-alpha-D-glucosamine biosynthesis; N-acetyl-alpha-D-glucosamine 1-phosphate from alpha-D-glucosamine 6-phosphate (route II): step 2/2. It functions in the pathway nucleotide-sugar biosynthesis; UDP-N-acetyl-alpha-D-glucosamine biosynthesis; UDP-N-acetyl-alpha-D-glucosamine from N-acetyl-alpha-D-glucosamine 1-phosphate: step 1/1. The protein operates within bacterial outer membrane biogenesis; LPS lipid A biosynthesis. In terms of biological role, catalyzes the last two sequential reactions in the de novo biosynthetic pathway for UDP-N-acetylglucosamine (UDP-GlcNAc). The C-terminal domain catalyzes the transfer of acetyl group from acetyl coenzyme A to glucosamine-1-phosphate (GlcN-1-P) to produce N-acetylglucosamine-1-phosphate (GlcNAc-1-P), which is converted into UDP-GlcNAc by the transfer of uridine 5-monophosphate (from uridine 5-triphosphate), a reaction catalyzed by the N-terminal domain. The sequence is that of Bifunctional protein GlmU from Shewanella putrefaciens (strain CN-32 / ATCC BAA-453).